The chain runs to 274 residues: 2-dehydro-3-deoxyphosphooctonate aldolase (274 aa).

It belongs to the KdsA family.

Its subcellular location is the cytoplasm. The catalysed reaction is D-arabinose 5-phosphate + phosphoenolpyruvate + H2O = 3-deoxy-alpha-D-manno-2-octulosonate-8-phosphate + phosphate. The protein operates within carbohydrate biosynthesis; 3-deoxy-D-manno-octulosonate biosynthesis; 3-deoxy-D-manno-octulosonate from D-ribulose 5-phosphate: step 2/3. Its pathway is bacterial outer membrane biogenesis; lipopolysaccharide biosynthesis. This chain is 2-dehydro-3-deoxyphosphooctonate aldolase, found in Rickettsia peacockii (strain Rustic).